The primary structure comprises 359 residues: Type-1 angiotensin II receptor (359 aa).

Residues 1-25 (MILNSSTEDGIKRIQDDCPKAGRHN) are Extracellular-facing. N4 is a glycosylation site (N-linked (GlcNAc...) asparagine). Angiotensin II is bound by residues Q15 and D17. Disulfide bonds link C18–C274 and C101–C180. A helical membrane pass occupies residues 26-55 (YIFVMIPTLYSIIFVVGIFGNSLVVIVIYF). Over 56 to 61 (YMKLKT) the chain is Cytoplasmic. A helical transmembrane segment spans residues 62 to 89 (VASVFLLNLALADLCFLLTLPLWAVYTA). Residues 90 to 98 (MEYRWPFGN) lie on the Extracellular side of the membrane. A helical membrane pass occupies residues 99-125 (YLCKIASASVSFNLYASVFLLTCLSID). At 126 to 141 (RYVAIVHPMKSPVRRT) the chain is on the cytoplasmic side. A helical membrane pass occupies residues 142–165 (MLMAKVTCIIIWLLAGLASLPTII). Residues 166-190 (HRNVFFIENTNITVCAFHYESQNST) lie on the Extracellular side of the membrane. Residue R167 participates in angiotensin II binding. N176 carries an N-linked (GlcNAc...) asparagine glycan. Residues F182, H183, and Y184 each contribute to the angiotensin II site. N-linked (GlcNAc...) asparagine glycosylation occurs at N188. The chain crosses the membrane as a helical span at residues 191 to 216 (LPIGLGLTKNILGFLFPFLIILTSYT). K199 lines the angiotensin II pocket. Over 217–239 (LIWKTLKRAYEIQKNKPRNDDIF) the chain is Cytoplasmic. Residues 240 to 268 (KIIMAIVLFFFFSWVPHQIFTFLDVLIQL) traverse the membrane as a helical segment. At 269–278 (GIIHDCKIAD) the chain is on the extracellular side. The chain crosses the membrane as a helical span at residues 279–304 (IVDTAMPITICIAYFNNCLNPLFYGF). The Cytoplasmic segment spans residues 305–359 (LGKKFKKYFLQLLKYIPPKAKSHSSLSTKMSTLSYRPSDHGNASTKKSASCVEVE). Residues 335 to 352 (STLSYRPSDHGNASTKKS) show a composition bias toward polar residues. The tract at residues 335–359 (STLSYRPSDHGNASTKKSASCVEVE) is disordered. C355 carries the S-palmitoyl cysteine lipid modification.

This sequence belongs to the G-protein coupled receptor 1 family. Interacts with MAS1. Interacts with ARRB1. Interacts with FLNA (via filamin repeat 21); increases PKA-mediated phosphorylation of FLNA. Post-translationally, C-terminal Ser or Thr residues may be phosphorylated. Adrenal, liver, aorta, kidney, lung, testis and heart.

The protein resides in the cell membrane. Receptor for angiotensin II, a vasoconstricting peptide, which acts as a key regulator of blood pressure and sodium retention by the kidney. The activated receptor in turn couples to G-alpha proteins G(q) (GNAQ, GNA11, GNA14 or GNA15) and thus activates phospholipase C and increases the cytosolic Ca(2+) concentrations, which in turn triggers cellular responses such as stimulation of protein kinase C. This is Type-1 angiotensin II receptor (AGTR1) from Canis lupus familiaris (Dog).